The chain runs to 568 residues: MTRDIDRENYAELYGPTTGDKVRLGDTELFAKVEEDLRTHGDEAVFGGGKTLRDGLGMAPGVTQAEGALDWVLTNATIIDPILGIVAADIGIRNGEIAGIGKAGNPDTMDGVDMVVGPSTDVYPAEGKIATAGGLDIHIHFNSAQLHEHALSGGITTMLGGGYGGGATTCTTGPENVKRFLQAAEAWPVNVGFYGKGNASDPGPLREQVEAGVCGLKLHEDWGSTPETINTCLEVAEDEDVQVCMHTDTLNEAGFLENTFGAVDGRTMHLFHIEGAGGGHAPDIMEMVGEPNMLPSSTNPSMPYTDNTFDEHLDMVMVCHHLNPDVPEDVAFAESRVRAETIAAEDVLHDMGAISMMTSDSQAMGRIAEVIPRTWQTASKMKSQRGPLPEDEGTGADNHRIKRYIAKYTVNPAISAGIEEHVGTLEPGKLADICLWDPAFFGVKPAMTFKGGFPVHSEMGEANGSLMTCEPILQRERAGAVGKAKHAISLSFVSPAAAEAGIDEEYGLDSRVVPIEGARTPGKDDMVYNSYCPDDIEVDPETFEVRVDGEHVTCEPSSELPLAQRYLL.

Residues 133 to 568 enclose the Urease domain; that stretch reads GGLDIHIHFN…ELPLAQRYLL (436 aa). Positions 138, 140, and 217 each coordinate Ni(2+). Lys-217 carries the post-translational modification N6-carboxylysine. Residue His-219 participates in substrate binding. His-246 and His-272 together coordinate Ni(2+). Residue His-320 is the Proton donor of the active site. Residue Asp-360 coordinates Ni(2+).

This sequence belongs to the metallo-dependent hydrolases superfamily. Urease alpha subunit family. Heterotrimer of UreA (gamma), UreB (beta) and UreC (alpha) subunits. Three heterotrimers associate to form the active enzyme. Ni cation serves as cofactor. Post-translationally, carboxylation allows a single lysine to coordinate two nickel ions.

Its subcellular location is the cytoplasm. It catalyses the reaction urea + 2 H2O + H(+) = hydrogencarbonate + 2 NH4(+). The protein operates within nitrogen metabolism; urea degradation; CO(2) and NH(3) from urea (urease route): step 1/1. This is Urease subunit alpha from Haloarcula marismortui (strain ATCC 43049 / DSM 3752 / JCM 8966 / VKM B-1809) (Halobacterium marismortui).